Consider the following 92-residue polypeptide: Small ribosomal subunit protein uS19 (92 aa).

This sequence belongs to the universal ribosomal protein uS19 family.

Its function is as follows. Protein S19 forms a complex with S13 that binds strongly to the 16S ribosomal RNA. This Geobacillus sp. (strain WCH70) protein is Small ribosomal subunit protein uS19.